A 457-amino-acid chain; its full sequence is MADS-box transcription factor 1 (457 aa).

The MADS-box domain occupies 11–71 (PSSPRRSIQR…NACHVYSSEE (61 aa)). Disordered stretches follow at residues 195-278 (SGDY…SRLH) and 295-328 (SSGY…LGQE). Over residues 199 to 216 (SDSPLEPSSSSSFSVPPE) the composition is skewed to low complexity. The segment covering 218 to 234 (LNPTLSFQHNDVPQTDN) has biased composition (polar residues). Over residues 265–278 (KNRRNGKPRISRLH) the composition is skewed to basic residues. A compositionally biased stretch (polar residues) spans 295-317 (SSGYLDPSSTPITPLDSAINQIT). Ser-372 is modified (phosphoserine).

Phosphorylated. Occurs periodically during mitosis.

It is found in the nucleus. Functionally, acts as a transcriptional activator with a role in the regulation of mitosis. Regulates septation and the periodic transcription of cdc15. The chain is MADS-box transcription factor 1 (mbx1) from Schizosaccharomyces pombe (strain 972 / ATCC 24843) (Fission yeast).